The primary structure comprises 113 residues: Dynein light chain Tctex-type 1 (113 aa).

Methionine 1 is modified (N-acetylmethionine). The tract at residues glutamine 41–isoleucine 113 is interaction with GNB1.

This sequence belongs to the dynein light chain Tctex-type family. As to quaternary structure, homodimer. The cytoplasmic dynein 1 complex consists of two catalytic heavy chains (HCs) and a number of non-catalytic subunits presented by intermediate chains (ICs), light intermediate chains (LICs) and light chains (LCs); the composition seems to vary in respect to the IC, LIC and LC composition. The heavy chain homodimer serves as a scaffold for the probable homodimeric assembly of the non-catalytic subunits. The ICs and LICs bind directly to the HC dimer and the LCs assemble on the IC dimer. DYNLT1 and DYNLT3 compete for association with dynein IC (DYNC1I1 or DYNC1I2). Self-associates. Interacts with RHO. Interacts with DYNC1I1 and DYNC1I2. Interacts with DOC2A, DOC2B and SCN10A. Interacts with PVR. Interacts with SVIL isoform 2. Interacts with GNB1; the interaction occurs in presence of guanine nucleotide-binding protein G(T) subunit gamma; the interaction diminishes the association of DYNLT1 with dynein IC (DYNC1I1 or DYNC1I2). Interacts with GNB2, GNB3 and GNB5; the interactions occur in presence of guanine nucleotide-binding protein G(T) subunit gamma. Interacts with ACVR2B and ARHGEF2. Interacts with DNAI4. Interacts with CFAP61. Post-translationally, phosphorylated by BMPR2. The phosphorylation status is proposed to regulate the association with the cytoplasmic dynein complex and may have role in cytoplasmic dynein cargo release.

The protein localises to the golgi apparatus. Its subcellular location is the cytoplasm. It localises to the cytoskeleton. The protein resides in the spindle. Acts as one of several non-catalytic accessory components of the cytoplasmic dynein 1 complex that are thought to be involved in linking dynein to cargos and to adapter proteins that regulate dynein function. Cytoplasmic dynein 1 acts as a motor for the intracellular retrograde motility of vesicles and organelles along microtubules. Binds to transport cargos and is involved in apical cargo transport such as rhodopsin-bearing vesicles in polarized epithelia. May also be a accessory component of axonemal dynein. Functionally, plays a role in neuronal morphogenesis; the function is independent of cytoplasmic dynein and seems to be coupled to regulation of the actin cytoskeleton by enhancing Rac1 activity. The function in neurogenesis may be regulated by association with a G-protein beta-gamma dimer. May function as a receptor-independent activator of heterotrimeric G-protein signaling; the activation appears to be independent of a nucleotide exchange. Plays a role in regulating neurogenesis; inhibits the genesis of neurons from precursor cells during cortical development presumably by antagonizing ARHGEF2. Involved in the regulation of mitotic spindle orientation. Unrelated to the role in retrograde microtubule-associated movement may play a role in the dimerization of cytoplasmic proteins/domains such as for ACVR2B. Binds to the cytoplasmic domain of ACVR2B and, in vitro, inhibits ACVR2B signaling. In Bos taurus (Bovine), this protein is Dynein light chain Tctex-type 1 (DYNLT1).